A 642-amino-acid polypeptide reads, in one-letter code: MPVITLPDGSQRSFDHAVSVMDIAMDIGPGLAKACIAGRVNGELVDAVDPIVDDASVAIITAKDEAGLEIIRHSCAHLLGHAIKQLWPDTKMAIGPVIDNGFYYDVDLDRTLTQEDIELLEKRMHQLAETNYDVIKKKVSWQEARDAFAARGENYKTTILDENISHDDRPGLYHHQEYVDMCRGPHVPNMRFCHHFKLQKISGAYWRGDSNNKMLQRIYGTAWADKKQLAAYLLRLEEAAKRDHRKIGKQLDLYHMQEEAPGMVFWHNDGWTIFRELEVFVRTKLKEYEYQEVKGPFMMDRVLWEKTGHWENYKEAMFTTSSENREYCIKPMNCPGHVQIFNQGLKSYRDLPLRMAEFGSCHRNEPSGALHGLMRVRGFTQDDAHIFCTEEQVRDEVNSCIKMVYDMYSTFGFEKIVVKLSTRPEKRIGSDDLWDRSEADLAAALKENGIPFEYQPGEGAFYGPKIEFTLHDCLDRAWQCGTVQLDFSLPGRLSASYVGESNERQVPVMIHRAILGSMERFIGILTEEYAGFFPTWLAPVQVVVMNITDGQSEYVAELTRKLQNAGIRAKADLRNEKIGFKIREHTLRRVPYMLVCGDKEVEAGKVAVRTRRGKDLGSIDVNEVIAKLQDEIRSRNLHQLEE.

In terms of domain architecture, TGS spans 1–61; it reads MPVITLPDGS…VDDASVAIIT (61 aa). The segment at 243-534 is catalytic; that stretch reads DHRKIGKQLD…LTEEYAGFFP (292 aa). Residues cysteine 334, histidine 385, and histidine 511 each contribute to the Zn(2+) site.

It belongs to the class-II aminoacyl-tRNA synthetase family. Homodimer. Requires Zn(2+) as cofactor.

Its subcellular location is the cytoplasm. It carries out the reaction tRNA(Thr) + L-threonine + ATP = L-threonyl-tRNA(Thr) + AMP + diphosphate + H(+). Catalyzes the attachment of threonine to tRNA(Thr) in a two-step reaction: L-threonine is first activated by ATP to form Thr-AMP and then transferred to the acceptor end of tRNA(Thr). Also edits incorrectly charged L-seryl-tRNA(Thr). This Erwinia tasmaniensis (strain DSM 17950 / CFBP 7177 / CIP 109463 / NCPPB 4357 / Et1/99) protein is Threonine--tRNA ligase.